The primary structure comprises 1415 residues: DNA-directed RNA polymerase subunit beta' (1415 aa).

Cysteine 69, cysteine 71, cysteine 84, and cysteine 87 together coordinate Zn(2+). Residues aspartate 461, aspartate 463, and aspartate 465 each coordinate Mg(2+). The Zn(2+) site is built by cysteine 805, cysteine 879, cysteine 886, and cysteine 889.

It belongs to the RNA polymerase beta' chain family. In terms of assembly, the RNAP catalytic core consists of 2 alpha, 1 beta, 1 beta' and 1 omega subunit. When a sigma factor is associated with the core the holoenzyme is formed, which can initiate transcription. Mg(2+) serves as cofactor. It depends on Zn(2+) as a cofactor.

The catalysed reaction is RNA(n) + a ribonucleoside 5'-triphosphate = RNA(n+1) + diphosphate. In terms of biological role, DNA-dependent RNA polymerase catalyzes the transcription of DNA into RNA using the four ribonucleoside triphosphates as substrates. This is DNA-directed RNA polymerase subunit beta' from Anaplasma marginale (strain Florida).